We begin with the raw amino-acid sequence, 233 residues long: MDCKYLLELLDSYSFIRSSRSFSSPIIIHGVAGCGKSTIIQKIALAFPELLIGSFTPALLDSNSGRKQLAVTSDPLDILDEYLGGPNPVVRLAKFCDPLQYSCEQPEVPHFTSLLTWRFCVRTTALLNGIFGCQIKSRREDLCHLTHENPYTTDPKGVVVAHEQEVINLLLQHGCPVTPTQHLWGLTIPVVSVYITSIASLSTVDRANLFLSLTRDSKALHIFEFDAWSHATC.

The (+)RNA virus helicase ATP-binding domain maps to 1-134; it reads MDCKYLLELL…ALLNGIFGCQ (134 aa). The (+)RNA virus helicase C-terminal domain occupies 135 to 233; sequence IKSRREDLCH…EFDAWSHATC (99 aa).

It belongs to the Tymovirales TGBp1 protein family. Homodimer and homooligomer. Interacts with capsid protein. Interacts with host AGO1; this interaction targets the host protein for degradation, thereby suppressing the antiviral RNA silencing.

The protein resides in the host cytoplasm. Functionally, transports viral genome to neighboring plant cells directly through plasmosdesmata, without any budding. The movement protein allows efficient cell to cell propagation, by bypassing the host cell wall barrier. Increases plasmodesma size exclusion limit. Acts as a suppressor of RNA-mediated gene silencing, also known as post-transcriptional gene silencing (PTGS), a mechanism of plant viral defense that limits the accumulation of viral RNAs. The chain is Movement and silencing protein TGBp1 from Narcissus mosaic virus (NMV).